Consider the following 68-residue polypeptide: Protein transport protein Sec61 subunit gamma (68 aa).

At Met-1–Glu-32 the chain is on the cytoplasmic side. A helical transmembrane segment spans residues Phe-33–Ile-61. Over Asn-62–Gly-68 the chain is Extracellular.

This sequence belongs to the SecE/SEC61-gamma family. In terms of assembly, the SEC61 channel-forming translocon complex consists of channel-forming core components SEC61A1, SEC61B and SEC61G and different auxiliary components such as SEC62 and SEC63. The SEC61 channel associates with the multi-pass translocon (MPT) complex.

It localises to the endoplasmic reticulum membrane. In terms of biological role, component of SEC61 channel-forming translocon complex that mediates transport of signal peptide-containing precursor polypeptides across the endoplasmic reticulum (ER). Forms a ribosome receptor and a gated pore in the ER membrane, both functions required for cotranslational translocation of nascent polypeptides. The SEC61 channel is also involved in ER membrane insertion of transmembrane proteins: it mediates membrane insertion of the first few transmembrane segments of proteins, while insertion of subsequent transmembrane regions of multi-pass membrane proteins is mediated by the multi-pass translocon (MPT) complex. This Gadus morhua (Atlantic cod) protein is Protein transport protein Sec61 subunit gamma (sec61g).